We begin with the raw amino-acid sequence, 265 residues long: Large ribosomal subunit protein eL8 (265 aa).

It belongs to the eukaryotic ribosomal protein eL8 family. As to quaternary structure, interacts with cmd-1 in the presence of Ca(2+).

The sequence is that of Large ribosomal subunit protein eL8 from Caenorhabditis elegans.